Reading from the N-terminus, the 504-residue chain is GTPase Der (504 aa).

In terms of domain architecture, EngA-type G 1 spans 3-166; it reads PVVALVGRPN…QVLAPLAEKL (164 aa). GTP is bound by residues 9 to 16, 56 to 60, and 118 to 121; these read GRPNVGKS, DTGGI, and NKTD. Positions 171-190 are disordered; it reads VDSDENVADDEQDEWDSDFD. Acidic residues predominate over residues 172-190; that stretch reads DSDENVADDEQDEWDSDFD. The region spanning 216-389 is the EngA-type G 2 domain; it reads IKIAIVGRPN…SIQEAYQCAT (174 aa). GTP-binding positions include 222–229, 269–273, and 334–337; these read GRPNVGKS, DTAGV, and NKWD. In terms of domain architecture, KH-like spans 390 to 474; sequence KKMTTSMLTR…PIRVLFQEGN (85 aa).

The protein belongs to the TRAFAC class TrmE-Era-EngA-EngB-Septin-like GTPase superfamily. EngA (Der) GTPase family. Associates with the 50S ribosomal subunit.

GTPase that plays an essential role in the late steps of ribosome biogenesis. The protein is GTPase Der of Glaesserella parasuis serovar 5 (strain SH0165) (Haemophilus parasuis).